Reading from the N-terminus, the 408-residue chain is MTFLQRLQGLADNKICAFAWFVVRRFDEERVPQAAASMTFTTLLALVPVLTVMVAVASIFPVFDRWSDSFVSFVNQTIVPQGADMVFDYINAFREQANRLTAIGSVMLVVTSLMLIRTIDNTFNRIWRVNSQRPWMMQFLVYWALLTFGPLSLGVGISFMVGSVQDAALASGAPQWSGALRTAATLTFMTLLLWGLYRFVPNRFVPARQAFVGALATAFCLETARSLFTWYMGNFDGYRSIYGAFAAVPFFLLWLNLLWTLVLGGAVLTSSLSYWQGEAFRRGFDSRGRFDDVLKILLLLDAAQKEGKALPVQEFRRHINMGYDELGELLEKLARHGYIYSGRQGWVLKTGADSIELNELFKLFVYRPLPVERDHVNQAVDAVMMPCLQTLNMTLAEFDAQAKKQQQS.

Helical transmembrane passes span 43–63 (LLAL…FPVF), 100–120 (LTAI…RTID), 139–159 (FLVY…GISF), 176–196 (WSGA…LWGL), 210–230 (AFVG…LFTW), and 248–268 (VPFF…GAVL).

The protein belongs to the UPF0761 family.

It localises to the cell inner membrane. The protein is UPF0761 membrane protein NMCC_0461 of Neisseria meningitidis serogroup C (strain 053442).